Consider the following 966-residue polypeptide: Mitogen-activated protein kinase kinase kinase 13 (966 aa).

Disordered stretches follow at residues 1 to 22, 30 to 49, and 90 to 114; these read MANF…SESK, ELTA…QQEK, and HDES…SGTE. Residues 95–113 are compositionally biased toward polar residues; sequence TAVSQGNSNTVDGESTSGT. The Protein kinase domain occupies 168-409; the sequence is ISELQWLGSG…FRQTLMHLDI (242 aa). ATP contacts are provided by residues 174–182 and K195; that span reads LGSGAQGAV. D279 functions as the Proton acceptor in the catalytic mechanism. 2 leucine-zipper regions span residues 433 to 454 and 486 to 507; these read VKKH…DEEL and LSAI…EQAV. Disordered regions lie at residues 534-599, 611-655, 744-834, and 846-908; these read KRKG…RGSH, AQEN…HHPR, DIPS…RRQR, and STFS…GLSD. Over residues 567 to 581 the composition is skewed to low complexity; the sequence is SPLSGSPKMSTSSSK. Over residues 582–594 the composition is skewed to basic residues; that stretch reads SRYRSKPRHRRGN. 2 stretches are compositionally biased toward polar residues: residues 611–629 and 785–795; these read AQEN…SQYP and RSESSLGTSHL. The span at 814-827 shows a compositional bias: acidic residues; the sequence is DSSEEEEGEVDSEV. Residues 815–828 form an acidic region; that stretch reads SSEEEEGEVDSEVE. Residues 846 to 855 are compositionally biased toward polar residues; sequence STFSSENFSV. Over residues 873-887 the composition is skewed to basic and acidic residues; sequence LADKLEDRLAEKLDD.

This sequence belongs to the protein kinase superfamily. STE Ser/Thr protein kinase family. MAP kinase kinase kinase subfamily. Homodimer; forms dimers through the leucine-zipper motif. Interacts with the C-terminus of MAPK8IP1 through the kinase catalytic domain. Binds PRDX3. Associates with the IKK complex through the kinase domain. It depends on Mg(2+) as a cofactor. In terms of processing, autophosphorylated on serine and threonine residues. Expressed in the adult brain, liver, placenta and pancreas, with expression strongest in the pancreas.

It is found in the cytoplasm. Its subcellular location is the membrane. It catalyses the reaction L-seryl-[protein] + ATP = O-phospho-L-seryl-[protein] + ADP + H(+). The catalysed reaction is L-threonyl-[protein] + ATP = O-phospho-L-threonyl-[protein] + ADP + H(+). Its activity is regulated as follows. Activated by autophosphorylation and homodimerization. Activates the JUN N-terminal pathway through activation of the MAP kinase kinase MAP2K7. Acts synergistically with PRDX3 to regulate the activation of NF-kappa-B in the cytosol. This activation is kinase-dependent and involves activating the IKK complex, the IKBKB-containing complex that phosphorylates inhibitors of NF-kappa-B. This chain is Mitogen-activated protein kinase kinase kinase 13, found in Homo sapiens (Human).